Here is a 129-residue protein sequence, read N- to C-terminus: Fluoride-specific ion channel FluC 1 (129 aa).

4 helical membrane-spanning segments follow: residues Leu-9–Trp-29, Gly-33–Val-53, Leu-62–Leu-82, and Ile-98–Gly-118. Na(+) contacts are provided by Gly-72 and Thr-75.

The protein belongs to the fluoride channel Fluc/FEX (TC 1.A.43) family.

Its subcellular location is the cell membrane. It catalyses the reaction fluoride(in) = fluoride(out). With respect to regulation, na(+) is not transported, but it plays an essential structural role and its presence is essential for fluoride channel function. In terms of biological role, fluoride-specific ion channel. Important for reducing fluoride concentration in the cell, thus reducing its toxicity. In Lactobacillus johnsonii (strain CNCM I-12250 / La1 / NCC 533), this protein is Fluoride-specific ion channel FluC 1.